The sequence spans 997 residues: Protein argonaute 5 (997 aa).

2 stretches are compositionally biased toward gly residues: residues 1-16 (MSNRGGGGHGGASRGR) and 43-59 (GGRGGSVSAGRGRGNVG). Residues 1 to 144 (MSNRGGGGHG…TSLPPASSKA (144 aa)) are disordered. A compositionally biased stretch (low complexity) spans 93-106 (SVASSSKTVSVASS). A compositionally biased stretch (polar residues) spans 116–129 (VSETMSNLQITSTE). The PAZ domain maps to 360 to 471 (VVTDFISKFL…LPMELCQIDE (112 aa)). Positions 638–958 (LLIVILPDVT…AAFRARYYME (321 aa)) constitute a Piwi domain. The a divalent metal cation site is built by D721 and D807. Interaction with guide RNA regions lie at residues 847 to 848 (KR), 893 to 901 (HAGIQGTSR), and 930 to 952 (YARCTKSVSIVPPAYYAHLAAFR). Residue H947 coordinates a divalent metal cation.

It belongs to the argonaute family. Ago subfamily. It depends on Mg(2+) as a cofactor. Requires Mn(2+) as cofactor.

Its function is as follows. Involved in RNA-mediated post-transcriptional gene silencing (PTGS). Main component of the RNA-induced silencing complex (RISC) that binds to a short guide RNA such as a microRNA (miRNA) or small interfering RNA (siRNA). RISC uses the mature miRNA or siRNA as a guide for slicer-directed cleavage of homologous mRNAs to repress gene expression. Associates with siRNAs of various sizes, from 21-24 nucleotide in length and preferentially recruits small RNAs with a 5' terminal cytosine. Probably involved in antiviral RNA silencing. Associates with siRNAs derived from cucumber mosaic virus (CMV). Targeted by the turnip yellows virus (TuYV) protein P0 (via F-box-like domain) for probable proteasome degradation and thereby inactivating AGO5 function in RNA silencing. The polypeptide is Protein argonaute 5 (AGO5) (Arabidopsis thaliana (Mouse-ear cress)).